The primary structure comprises 261 residues: MDIVSHQKIRRFEAGTFQEIESSVATEYPLTIYVNDQELVTIVCTPEYLEDLVVGFLTSEGIVRGPQDIDSVDIIEATGHAKVSANFVNKFNAKYRGKRYITSCCGKSRENFYFQSDASLVNVKQNGSLQLTTDMIFRLMENFEQNSATFHQTGGVHNAALCSSAEIIYSRMDIGRHNALDKIYGRALQDGTSTEDKAIIFSGRISSEILVKTAKLGCGIILSRSAPTELAINMAEELNITTVGFIRGDRLNVYSGFERIT.

Cysteine 105 (cysteine persulfide intermediate) is an active-site residue. 245 to 250 contacts Mo-bis(molybdopterin guanine dinucleotide); sequence FIRGDR.

This sequence belongs to the FdhD family.

It is found in the cytoplasm. Functionally, required for formate dehydrogenase (FDH) activity. Acts as a sulfur carrier protein that transfers sulfur from IscS to the molybdenum cofactor prior to its insertion into FDH. The polypeptide is Sulfur carrier protein FdhD (Listeria monocytogenes serotype 4b (strain F2365)).